The chain runs to 57 residues: Large ribosomal subunit protein bL32 (57 aa).

Belongs to the bacterial ribosomal protein bL32 family.

This chain is Large ribosomal subunit protein bL32, found in Staphylococcus aureus (strain MSSA476).